A 238-amino-acid chain; its full sequence is Tetraspanin-4 (238 aa).

Residues 1-13 (MARGCLQGVKYLM) are Cytoplasmic-facing. Residues 14–34 (FAFNLLFWLGGCGVLGVGIWL) traverse the membrane as a helical segment. Residues 35–55 (AATQGNFATLSSSFPSLSAAN) are Extracellular-facing. The helical transmembrane segment at 56 to 76 (LLIVTGTFVMAIGFVGCIGAL) threads the bilayer. The Cytoplasmic segment spans residues 77 to 85 (KENKCLLLT). The chain crosses the membrane as a helical span at residues 86–106 (FFVLLLLVFLLEATIAVLFFA). Residues 107–201 (YSDKIDSYAQ…ETVKAWLQEN (95 aa)) lie on the Extracellular side of the membrane. N152 and N161 each carry an N-linked (GlcNAc...) asparagine glycan. The chain crosses the membrane as a helical span at residues 202-222 (LLAVGIFGLCTALVQILGLTF). Topologically, residues 223–238 (AMTMYCQVVKADTYCA) are cytoplasmic.

This sequence belongs to the tetraspanin (TM4SF) family. In terms of assembly, forms a complex with integrins.

It is found in the membrane. The polypeptide is Tetraspanin-4 (Tspan4) (Mus musculus (Mouse)).